A 237-amino-acid chain; its full sequence is tRNA (guanine-N(7)-)-methyltransferase (237 aa).

Positions 68, 93, 120, and 143 each coordinate S-adenosyl-L-methionine. Aspartate 143 is a catalytic residue. Residues lysine 147, aspartate 179, and 216 to 219 each bind substrate; that span reads TKFE.

This sequence belongs to the class I-like SAM-binding methyltransferase superfamily. TrmB family.

The catalysed reaction is guanosine(46) in tRNA + S-adenosyl-L-methionine = N(7)-methylguanosine(46) in tRNA + S-adenosyl-L-homocysteine. It participates in tRNA modification; N(7)-methylguanine-tRNA biosynthesis. Catalyzes the formation of N(7)-methylguanine at position 46 (m7G46) in tRNA. The polypeptide is tRNA (guanine-N(7)-)-methyltransferase (Shewanella piezotolerans (strain WP3 / JCM 13877)).